The primary structure comprises 131 residues: Large ribosomal subunit protein bL17 (131 aa).

Belongs to the bacterial ribosomal protein bL17 family. As to quaternary structure, part of the 50S ribosomal subunit. Contacts protein L32.

This Finegoldia magna (strain ATCC 29328 / DSM 20472 / WAL 2508) (Peptostreptococcus magnus) protein is Large ribosomal subunit protein bL17.